The chain runs to 180 residues: Probable chorismate pyruvate-lyase (180 aa).

Substrate is bound by residues Arg-82, Leu-120, and Glu-165.

Belongs to the UbiC family.

It localises to the cytoplasm. It catalyses the reaction chorismate = 4-hydroxybenzoate + pyruvate. Its pathway is cofactor biosynthesis; ubiquinone biosynthesis. Functionally, removes the pyruvyl group from chorismate, with concomitant aromatization of the ring, to provide 4-hydroxybenzoate (4HB) for the ubiquinone pathway. The sequence is that of Probable chorismate pyruvate-lyase from Photobacterium profundum (strain SS9).